We begin with the raw amino-acid sequence, 503 residues long: GMP synthase [glutamine-hydrolyzing] (503 aa).

A Glutamine amidotransferase type-1 domain is found at 3–189 (PVLVVDFGSQ…AFLSSFAAPN (187 aa)). Cysteine 80 serves as the catalytic Nucleophile. Catalysis depends on residues histidine 165 and glutamate 167. A GMPS ATP-PPase domain is found at 190-380 (WDPEQTICGT…LGIPKHIVHR (191 aa)). 217–223 (SGGVDSV) contributes to the ATP binding site.

As to quaternary structure, homodimer.

It carries out the reaction XMP + L-glutamine + ATP + H2O = GMP + L-glutamate + AMP + diphosphate + 2 H(+). The protein operates within purine metabolism; GMP biosynthesis; GMP from XMP (L-Gln route): step 1/1. In terms of biological role, catalyzes the synthesis of GMP from XMP. The polypeptide is GMP synthase [glutamine-hydrolyzing] (Tropheryma whipplei (strain Twist) (Whipple's bacillus)).